The sequence spans 658 residues: Glycogen debranching enzyme (658 aa).

Asp336 serves as the catalytic Nucleophile. The active-site Proton donor is the Glu371. A disordered region spans residues Ala460–Gly484.

It belongs to the glycosyl hydrolase 13 family.

The catalysed reaction is Hydrolysis of (1-&gt;6)-alpha-D-glucosidic linkages to branches with degrees of polymerization of three or four glucose residues in limit dextrin.. Its pathway is glycan degradation; glycogen degradation. Its function is as follows. Removes maltotriose and maltotetraose chains that are attached by 1,6-alpha-linkage to the limit dextrin main chain, generating a debranched limit dextrin. The polypeptide is Glycogen debranching enzyme (Escherichia fergusonii (strain ATCC 35469 / DSM 13698 / CCUG 18766 / IAM 14443 / JCM 21226 / LMG 7866 / NBRC 102419 / NCTC 12128 / CDC 0568-73)).